An 866-amino-acid polypeptide reads, in one-letter code: DNA replication licensing factor MCM4 (866 aa).

Disordered regions lie at residues Met1 to Ala67, Ser81 to Arg107, and Gly124 to Glu145. Composition is skewed to polar residues over residues Asp47–Ala63 and Ser81–Ser93. Ser55 and Ser81 each carry phosphoserine. At Thr87 the chain carries Phosphothreonine. In terms of domain architecture, MCM spans Ile460 to Val669. Position 512 to 519 (Gly512 to Ser519) interacts with ATP. The short motif at Ser644–Asp647 is the Arginine finger element.

The protein belongs to the MCM family. In terms of assembly, component of the Mcm2-7 complex. The complex forms a toroidal hexameric ring with the proposed subunit order Mcm2-Mcm6-Mcm4-Mcm7-Mcm3-Mcm5. Phosphorylated by the catalytic component of the Dbf4-dependent kinase (DDK) complex Cdc7.

It localises to the nucleus. The catalysed reaction is ATP + H2O = ADP + phosphate + H(+). Functionally, acts as a component of the Mcm2-7 complex (Mcm complex) which is the putative replicative helicase essential for 'once per cell cycle' DNA replication initiation and elongation in eukaryotic cells. The active ATPase sites in the Mcm2-7 ring are formed through the interaction surfaces of two neighboring subunits such that a critical structure of a conserved arginine finger motif is provided in trans relative to the ATP-binding site of the Walker A box of the adjacent subunit. The six ATPase active sites, however, are likely to contribute differentially to the complex helicase activity. Required for DNA replication and cell proliferation. Essential role in mitotic DNA replication but not in endoreplication. This chain is DNA replication licensing factor MCM4 (dpa), found in Drosophila melanogaster (Fruit fly).